The following is a 354-amino-acid chain: Histidinol-phosphate aminotransferase (354 aa).

N6-(pyridoxal phosphate)lysine is present on lysine 215.

This sequence belongs to the class-II pyridoxal-phosphate-dependent aminotransferase family. Histidinol-phosphate aminotransferase subfamily. In terms of assembly, homodimer. Pyridoxal 5'-phosphate is required as a cofactor.

The enzyme catalyses L-histidinol phosphate + 2-oxoglutarate = 3-(imidazol-4-yl)-2-oxopropyl phosphate + L-glutamate. Its pathway is amino-acid biosynthesis; L-histidine biosynthesis; L-histidine from 5-phospho-alpha-D-ribose 1-diphosphate: step 7/9. This is Histidinol-phosphate aminotransferase from Vesicomyosocius okutanii subsp. Calyptogena okutanii (strain HA).